We begin with the raw amino-acid sequence, 527 residues long: Triostin synthetase I (527 aa).

187 to 188 (GG) contributes to the ATP binding site. 230 to 231 (HQ) provides a ligand contact to substrate. Residues 300–302 (SAP), aspartate 406, arginine 421, and lysine 512 each bind ATP. Lysine 512 provides a ligand contact to substrate.

Belongs to the ATP-dependent AMP-binding enzyme family. As to quaternary structure, monomer.

Involved in triostin biosynthesis. Activates quinoxaline-2-carboxylic acid (QA) via catalysis of the ATP-pyrophosphate exchange reaction dependent on QA, and the formation of the corresponding adenylate. Also activates structural analogs of QA such as quinoline-2-carboxylic acid and thieno[3,2-b]pyridine-5-carboxylic acid, but not quinoline-3-carboxylic acid, quinoline-4-carboxylic acid, pyridine-2-carboxylic acid or 2-pyrazinecarboxylic acid. The sequence is that of Triostin synthetase I (trsA) from Streptomyces triostinicus.